The following is a 101-amino-acid chain: Aspartyl/glutamyl-tRNA(Asn/Gln) amidotransferase subunit C (101 aa).

Belongs to the GatC family. As to quaternary structure, heterotrimer of A, B and C subunits.

The catalysed reaction is L-glutamyl-tRNA(Gln) + L-glutamine + ATP + H2O = L-glutaminyl-tRNA(Gln) + L-glutamate + ADP + phosphate + H(+). The enzyme catalyses L-aspartyl-tRNA(Asn) + L-glutamine + ATP + H2O = L-asparaginyl-tRNA(Asn) + L-glutamate + ADP + phosphate + 2 H(+). Allows the formation of correctly charged Asn-tRNA(Asn) or Gln-tRNA(Gln) through the transamidation of misacylated Asp-tRNA(Asn) or Glu-tRNA(Gln) in organisms which lack either or both of asparaginyl-tRNA or glutaminyl-tRNA synthetases. The reaction takes place in the presence of glutamine and ATP through an activated phospho-Asp-tRNA(Asn) or phospho-Glu-tRNA(Gln). The protein is Aspartyl/glutamyl-tRNA(Asn/Gln) amidotransferase subunit C of Lactococcus lactis subsp. cremoris (strain SK11).